The primary structure comprises 279 residues: Pantothenate synthetase (279 aa).

Residue 26–33 (MGNLHEGH) participates in ATP binding. His-33 functions as the Proton donor in the catalytic mechanism. Position 57 (Gln-57) interacts with (R)-pantoate. Gln-57 provides a ligand contact to beta-alanine. 144–147 (GKKD) lines the ATP pocket. Gln-150 contacts (R)-pantoate. ATP-binding positions include Val-173 and 181 to 184 (LSSR).

It belongs to the pantothenate synthetase family. Homodimer.

It localises to the cytoplasm. It catalyses the reaction (R)-pantoate + beta-alanine + ATP = (R)-pantothenate + AMP + diphosphate + H(+). It participates in cofactor biosynthesis; (R)-pantothenate biosynthesis; (R)-pantothenate from (R)-pantoate and beta-alanine: step 1/1. Catalyzes the condensation of pantoate with beta-alanine in an ATP-dependent reaction via a pantoyl-adenylate intermediate. The protein is Pantothenate synthetase of Burkholderia orbicola (strain MC0-3).